Here is a 1383-residue protein sequence, read N- to C-terminus: DNA-directed RNA polymerase subunit beta (1383 aa).

Belongs to the RNA polymerase beta chain family. As to quaternary structure, the RNAP catalytic core consists of 2 alpha, 1 beta, 1 beta' and 1 omega subunit. When a sigma factor is associated with the core the holoenzyme is formed, which can initiate transcription.

It catalyses the reaction RNA(n) + a ribonucleoside 5'-triphosphate = RNA(n+1) + diphosphate. DNA-dependent RNA polymerase catalyzes the transcription of DNA into RNA using the four ribonucleoside triphosphates as substrates. This is DNA-directed RNA polymerase subunit beta from Xanthomonas oryzae pv. oryzae (strain MAFF 311018).